We begin with the raw amino-acid sequence, 506 residues long: Proline--tRNA ligase (506 aa).

The protein belongs to the class-II aminoacyl-tRNA synthetase family. ProS type 3 subfamily. As to quaternary structure, homodimer.

It localises to the cytoplasm. The catalysed reaction is tRNA(Pro) + L-proline + ATP = L-prolyl-tRNA(Pro) + AMP + diphosphate. Its function is as follows. Catalyzes the attachment of proline to tRNA(Pro) in a two-step reaction: proline is first activated by ATP to form Pro-AMP and then transferred to the acceptor end of tRNA(Pro). The chain is Proline--tRNA ligase from Akkermansia muciniphila (strain ATCC BAA-835 / DSM 22959 / JCM 33894 / BCRC 81048 / CCUG 64013 / CIP 107961 / Muc).